The chain runs to 688 residues: Protein adenylyltransferase SelO, mitochondrial (688 aa).

A mitochondrion-targeting transit peptide spans 1–23 (MGEKRTIIKALKNSAASHFIKKL). Positions 132, 134, 135, 156, 168, 169, 220, and 227 each coordinate ATP. The active-site Proton acceptor is Asp-338. Mg(2+) contacts are provided by Asn-339 and Asp-348. Asp-348 is a binding site for ATP.

It belongs to the SELO family. Mg(2+) is required as a cofactor. Post-translationally, forms probably one or more intrachain disulfide bridges.

Its subcellular location is the mitochondrion. The enzyme catalyses L-tyrosyl-[protein] + ATP = O-(5'-adenylyl)-L-tyrosyl-[protein] + diphosphate. Catalyzes the transfer of adenosine 5'-monophosphate (AMP) to Tyr residues of target mitochondrial proteins (AMPylation). Involved in redox homeostasis by regulating the cellular response to oxidative stress. Regulates protein S-glutathionylation levels possibly by AMPylation of deglutathionylation enzymes such as glutaredoxins. The polypeptide is Protein adenylyltransferase SelO, mitochondrial (Saccharomyces cerevisiae (strain ATCC 204508 / S288c) (Baker's yeast)).